Here is a 192-residue protein sequence, read N- to C-terminus: 7-methyl-GTP pyrophosphatase (192 aa).

Aspartate 69 serves as the catalytic Proton acceptor.

Belongs to the Maf family. YceF subfamily. A divalent metal cation is required as a cofactor.

It is found in the cytoplasm. It carries out the reaction N(7)-methyl-GTP + H2O = N(7)-methyl-GMP + diphosphate + H(+). Nucleoside triphosphate pyrophosphatase that hydrolyzes 7-methyl-GTP (m(7)GTP). May have a dual role in cell division arrest and in preventing the incorporation of modified nucleotides into cellular nucleic acids. The chain is 7-methyl-GTP pyrophosphatase from Pseudomonas fluorescens (strain ATCC BAA-477 / NRRL B-23932 / Pf-5).